The sequence spans 362 residues: Putative sphingolipid delta(4)-desaturase/C4-monooxygenase (362 aa).

The next 3 membrane-spanning stretches (helical) occupy residues 45 to 61, 71 to 91, and 107 to 127; these read YVVS…CWLL, LEAY…IHDI, and FFGM…FKKY. The Histidine box-1 motif lies at 89-93; the sequence is HDISH. Residues 128–132 carry the Histidine box-2 motif; that stretch reads HVEHH. 2 helical membrane passes run 160–177 and 198–218; these read LLWL…PLII and LLIL…GTII. The Histidine box-3 signature appears at 259 to 263; the sequence is HVEHH.

Belongs to the fatty acid desaturase type 1 family. DEGS subfamily.

It is found in the membrane. It carries out the reaction an N-acyl-15-methylhexadecasphinganine + 2 Fe(II)-[cytochrome b5] + O2 + 2 H(+) = an N-acyl-4-hydroxy-15-methylhexadecasphinganine + 2 Fe(III)-[cytochrome b5] + H2O. The catalysed reaction is an N-acyl-15-methylhexadecasphinganine + 2 Fe(II)-[cytochrome b5] + O2 + 2 H(+) = an N-acyl-15-methylhexadecasphing-4-enine + 2 Fe(III)-[cytochrome b5] + 2 H2O. It catalyses the reaction a dihydroceramide + 2 Fe(II)-[cytochrome b5] + O2 + 2 H(+) = a phytoceramide + 2 Fe(III)-[cytochrome b5] + H2O. The enzyme catalyses an N-acylsphinganine + 2 Fe(II)-[cytochrome b5] + O2 + 2 H(+) = an N-acylsphing-4-enine + 2 Fe(III)-[cytochrome b5] + 2 H2O. It carries out the reaction N-octanoylsphinganine + 2 Fe(II)-[cytochrome b5] + O2 + 2 H(+) = N-octanoyl-4-hydroxysphinganine + 2 Fe(III)-[cytochrome b5] + H2O. The catalysed reaction is an N-acylsphinganine + 2 Fe(II)-[cytochrome b5] + O2 + 2 H(+) = an N-acyl-(4R)-4-hydroxysphinganine + 2 Fe(III)-[cytochrome b5] + H2O. The protein operates within lipid metabolism; sphingolipid metabolism. Its function is as follows. Bifunctional enzyme which acts both as a sphingolipid delta(4)-desaturase and a sphingolipid C4-monooxygenase. C.elegans contain specific sphingoid bases, which are unique or different in structure compared to the sphingoid bases found in other animals. Two examples of these distinctive compounds are: 15-methylhexadecasphinganine and 15-methylhexadecasphing-4-enine and this enzyme can catalyze their conversion. The protein is Putative sphingolipid delta(4)-desaturase/C4-monooxygenase (ttm-5) of Caenorhabditis elegans.